Consider the following 458-residue polypeptide: Cysteine--tRNA ligase (458 aa).

A Zn(2+)-binding site is contributed by C27. The 'HIGH' region motif lies at I29–H39. C207, H232, and E236 together coordinate Zn(2+). Positions K265–S269 match the 'KMSKS' region motif. Residue K268 coordinates ATP.

It belongs to the class-I aminoacyl-tRNA synthetase family. Monomer. Requires Zn(2+) as cofactor.

It localises to the cytoplasm. The catalysed reaction is tRNA(Cys) + L-cysteine + ATP = L-cysteinyl-tRNA(Cys) + AMP + diphosphate. The chain is Cysteine--tRNA ligase from Dehalococcoides mccartyi (strain ATCC BAA-2266 / KCTC 15142 / 195) (Dehalococcoides ethenogenes (strain 195)).